We begin with the raw amino-acid sequence, 453 residues long: Proton extrusion protein PxcA (453 aa).

A disordered region spans residues 147 to 189; it reads SQDKETQTLDNKSTNQTNSKLSNNNKISSGQNDSRLESASQKT. A compositionally biased stretch (polar residues) spans 154 to 163; it reads TLDNKSTNQT. The span at 164–175 shows a compositional bias: low complexity; sequence NSKLSNNNKISS. Over residues 176–189 the composition is skewed to polar residues; sequence GQNDSRLESASQKT. The next 4 helical transmembrane spans lie at 235 to 255, 330 to 350, 377 to 397, and 413 to 433; these read FILLLIIVPLLTHQLTKTFLL, SIGNVFADLFSVTAFAIVIVS, LIILFTDMFVGFHSPHGWEVI, and FNFLFIATFPVILDTVLKYWI.

It belongs to the CemA family.

It is found in the cell inner membrane. Its function is as follows. Required for H(+) efflux immediately after light irradiation to form a rapid H(+) concentration gradient across the thylakoid membranes. Together with PxcL, contributes to transient H(+) uptake following dark to light transition. The polypeptide is Proton extrusion protein PxcA (Crocosphaera subtropica (strain ATCC 51142 / BH68) (Cyanothece sp. (strain ATCC 51142))).